The primary structure comprises 764 residues: Endoribonuclease YSH1 (764 aa).

The Zn(2+) site is built by histidine 73, histidine 75, aspartate 77, histidine 78, histidine 167, and aspartate 188. Residue histidine 412 is the Proton donor of the active site. Residue histidine 434 participates in Zn(2+) binding.

The protein belongs to the metallo-beta-lactamase superfamily. RNA-metabolizing metallo-beta-lactamase-like family. CPSF2/YSH1 subfamily.

It is found in the nucleus. Component of the cleavage factor I (CF I) involved in pre-mRNA 3'-end processing. The protein is Endoribonuclease YSH1 (YSH1) of Kluyveromyces lactis (strain ATCC 8585 / CBS 2359 / DSM 70799 / NBRC 1267 / NRRL Y-1140 / WM37) (Yeast).